We begin with the raw amino-acid sequence, 257 residues long: Protein MoaE (257 aa).

Position 6-29 (6-29 (VITGGGTGIGAACARLMHPAGERV)) interacts with NAD(+). The interval 75-96 (LMSSSAAPAGWATAPPPRPATA) is disordered. S132 provides a ligand contact to substrate. The Proton acceptor role is filled by Y145.

The protein belongs to the short-chain dehydrogenases/reductases (SDR) family.

Might catalyze the conversion of monoamine compounds or their metabolites. This is Protein MoaE (moaE) from Klebsiella aerogenes (Enterobacter aerogenes).